Reading from the N-terminus, the 251-residue chain is MyoD family inhibitor (251 aa).

Disordered stretches follow at residues 1–64 (MSQV…PHDS), 84–167 (VTCQ…APAV), and 230–251 (RPKQ…GKEF). Over residues 84–94 (VTCQPQGNPQG) the composition is skewed to polar residues. The segment covering 138 to 154 (GSQAGRKSRGSARSASQ) has biased composition (low complexity).

This sequence belongs to the MDFI family. As to quaternary structure, interacts (via C-terminus) with AXIN1 and LEF1. Interacts with CCNT2. Interacts (via C-terminus) with Piezo channel composed of PIEZO1 or PIEZO2; the interaction prolongs Piezo channel inactivation. As to expression, in the embryo, highly expressed in the sclerotome. Also expressed in the notochord, neural tube, limb buds, heart, branchial arches and head mesenchyme. In the adult, highly expressed in skeletal muscle. Expressed at lower levels in most other tissues.

The protein resides in the nucleus. It localises to the cytoplasm. In terms of biological role, inhibits the transactivation activity of the Myod family of myogenic factors and represses myogenesis. Acts by associating with Myod family members and retaining them in the cytoplasm by masking their nuclear localization signals. Can also interfere with the DNA-binding activity of Myod family members. Plays an important role in trophoblast and chondrogenic differentiation. Regulates the transcriptional activity of TCF7L1/TCF3 by interacting directly with Tcf7l1/Tcf3 and preventing it from binding DNA. Binds to the axin complex, resulting in an increase in the level of free beta-catenin. Affects axin regulation of the WNT and JNK signaling pathways. Regulates the activity of mechanosensitive Piezo channel. This is MyoD family inhibitor (Mdfi) from Mus musculus (Mouse).